We begin with the raw amino-acid sequence, 530 residues long: MASDFLPVHRALLSVSDKTGLVELARVLLAYNIELLSTGGTATIIREAGLPVQDVADLTGFPEMMDGRVKTLHPVVHGGLLGRAGIDDAVMAKHGIAPIDLLILNLYPFEQITAKKDCTLADAVDTIDIGGPAMLRSAAKNFARVAVATSPDQYPDLLAELQEHHGQLSAEKRFALAVAAFNHVAQYDAAISNYLSSVSDMHTTLPLRHEFPAQLNNTFVKMTELRYGENPHQTGAFYRDVHPQPGTLATFQQLQGKRLSYNNLVDADAAWECVRQFEAPACVIVKHANPCGVAVGMACSDAYEAAYATDPTSAFGGIIAFNRTLDAVTMKSILDRQFVEVFIAPYYDADALAYAAKKANVRVLRIPSSAAMKATNQYDFKRIGSGLLVQSADTMHIHSDVLRTVTTLAPTDKQRRDLMFAWRVVKYVKSNAIVYAKDNRTIGIGAGQMSRVYSARIAGIKAADAHLAVTGSVMASDAFFPFRDGIDAAAATGIKAVIQPGGSMRDNEVIAAADEHGIAMLFTGIRHFRH.

Positions 1–149 constitute an MGS-like domain; sequence MASDFLPVHR…KNFARVAVAT (149 aa).

It belongs to the PurH family.

It carries out the reaction (6R)-10-formyltetrahydrofolate + 5-amino-1-(5-phospho-beta-D-ribosyl)imidazole-4-carboxamide = 5-formamido-1-(5-phospho-D-ribosyl)imidazole-4-carboxamide + (6S)-5,6,7,8-tetrahydrofolate. The catalysed reaction is IMP + H2O = 5-formamido-1-(5-phospho-D-ribosyl)imidazole-4-carboxamide. It participates in purine metabolism; IMP biosynthesis via de novo pathway; 5-formamido-1-(5-phospho-D-ribosyl)imidazole-4-carboxamide from 5-amino-1-(5-phospho-D-ribosyl)imidazole-4-carboxamide (10-formyl THF route): step 1/1. Its pathway is purine metabolism; IMP biosynthesis via de novo pathway; IMP from 5-formamido-1-(5-phospho-D-ribosyl)imidazole-4-carboxamide: step 1/1. This Xylella fastidiosa (strain M12) protein is Bifunctional purine biosynthesis protein PurH.